We begin with the raw amino-acid sequence, 227 residues long: Basic leucine zipper 24 (227 aa).

The segment at 44-68 (EDKDQDRVTRGCSHTHSCNPPGPED) is disordered. A bZIP domain is found at 94 to 160 (DSSNKKRLCG…IRLRALLVEM (67 aa)). The tract at residues 98–118 (KKRLCGNREAVRKYREKKKAR) is basic motif. The segment at 122–129 (LEDEVMRL) is leucine-zipper.

Homodimer. As to expression, expressed in young leaves and cauline leaves.

It is found in the nucleus. Its subcellular location is the cytoplasm. Functionally, transcription factor involved in the regulation of salt stress response. Functions as a negative transcriptional regulator of salt stress acclimation response by regulating cation homeostasis. Negatively regulates the expression of genes contributing to ion and osmotic homeostasis during salt stress, such as the Na(+) transporter HKT1, the Na(+)/H(+) antiporter SOS1, the aquaporin PIP2-1 and the glutamine synthetase GLN1-3. In addition, targets genes with functions in plant growth and development, such as argonaute 4 (AGO4) and cyclophilin 19 (CYP19). In Arabidopsis thaliana (Mouse-ear cress), this protein is Basic leucine zipper 24.